Consider the following 945-residue polypeptide: Isoleucine--tRNA ligase 1 (945 aa).

A 'HIGH' region motif is present at residues 66–76 (PYANGDIHLGH). Position 581 (Glu581) interacts with L-isoleucyl-5'-AMP. Residues 622–626 (KMSKS) carry the 'KMSKS' region motif. Lys625 lines the ATP pocket. The Zn(2+) site is built by Cys908, Cys911, Cys928, and Cys931.

It belongs to the class-I aminoacyl-tRNA synthetase family. IleS type 1 subfamily. As to quaternary structure, monomer. It depends on Zn(2+) as a cofactor.

Its subcellular location is the cytoplasm. It carries out the reaction tRNA(Ile) + L-isoleucine + ATP = L-isoleucyl-tRNA(Ile) + AMP + diphosphate. Functionally, catalyzes the attachment of isoleucine to tRNA(Ile). As IleRS can inadvertently accommodate and process structurally similar amino acids such as valine, to avoid such errors it has two additional distinct tRNA(Ile)-dependent editing activities. One activity is designated as 'pretransfer' editing and involves the hydrolysis of activated Val-AMP. The other activity is designated 'posttransfer' editing and involves deacylation of mischarged Val-tRNA(Ile). In Burkholderia mallei (strain ATCC 23344), this protein is Isoleucine--tRNA ligase 1.